Consider the following 229-residue polypeptide: Ribulose-phosphate 3-epimerase (229 aa).

Ser12 lines the substrate pocket. His37, Asp39, and His70 together coordinate a divalent metal cation. Asp39 functions as the Proton acceptor in the catalytic mechanism. Substrate contacts are provided by residues His70, 146-149 (GFTG), 181-183 (DGG), and 203-204 (AS). Asp181 provides a ligand contact to a divalent metal cation. Asp181 serves as the catalytic Proton donor.

This sequence belongs to the ribulose-phosphate 3-epimerase family. The cofactor is a divalent metal cation.

It carries out the reaction D-ribulose 5-phosphate = D-xylulose 5-phosphate. Its pathway is carbohydrate degradation. Functionally, catalyzes the reversible epimerization of D-ribulose 5-phosphate to D-xylulose 5-phosphate. The polypeptide is Ribulose-phosphate 3-epimerase (Chlamydia pneumoniae (Chlamydophila pneumoniae)).